A 263-amino-acid chain; its full sequence is 3-deoxy-manno-octulosonate cytidylyltransferase 1 (263 aa).

The protein belongs to the KdsB family.

Its subcellular location is the cytoplasm. The catalysed reaction is 3-deoxy-alpha-D-manno-oct-2-ulosonate + CTP = CMP-3-deoxy-beta-D-manno-octulosonate + diphosphate. It functions in the pathway nucleotide-sugar biosynthesis; CMP-3-deoxy-D-manno-octulosonate biosynthesis; CMP-3-deoxy-D-manno-octulosonate from 3-deoxy-D-manno-octulosonate and CTP: step 1/1. Its pathway is bacterial outer membrane biogenesis; lipopolysaccharide biosynthesis. Its function is as follows. Activates KDO (a required 8-carbon sugar) for incorporation into bacterial lipopolysaccharide in Gram-negative bacteria. The polypeptide is 3-deoxy-manno-octulosonate cytidylyltransferase 1 (Burkholderia ambifaria (strain MC40-6)).